Consider the following 80-residue polypeptide: DNA-binding protein HU-like (80 aa).

The protein belongs to the bacterial histone-like protein family.

Its function is as follows. Histone-like DNA-binding protein which is capable of wrapping DNA to stabilize it, and thus to prevent its denaturation under extreme environmental conditions. The polypeptide is DNA-binding protein HU-like (Rickettsia prowazekii (strain Madrid E)).